Reading from the N-terminus, the 779-residue chain is Acyl-CoA dehydrogenase family member 11 (779 aa).

N6-acetyllysine is present on residues K163, K166, and K175. At S210 the chain carries Phosphoserine. A Phosphotyrosine modification is found at Y323. N6-succinyllysine is present on residues K368 and K390. FAD is bound by residues 503–513 (FCMTEPNVSSS), 511–513 (SSS), 537–539 (WSS), and S539. A substrate-binding site is contributed by S513. A substrate-binding site is contributed by 628–631 (GPGR). FAD is bound by residues R656, Q726, and 726–730 (QVHGG). G754 is a binding site for substrate. FAD-binding positions include 755–757 (PDE) and E757. At K765 the chain carries N6-acetyllysine.

This sequence belongs to the acyl-CoA dehydrogenase family. Homodimer. FAD serves as cofactor.

The protein localises to the peroxisome. Its subcellular location is the mitochondrion membrane. It carries out the reaction a 2,3-saturated acyl-CoA + oxidized [electron-transfer flavoprotein] + H(+) = a (2E)-enoyl-CoA + reduced [electron-transfer flavoprotein]. The catalysed reaction is docosanoyl-CoA + oxidized [electron-transfer flavoprotein] + H(+) = (2E)-docosenoyl-CoA + reduced [electron-transfer flavoprotein]. The enzyme catalyses tetracosanoyl-CoA + oxidized [electron-transfer flavoprotein] + H(+) = (2E)-tetracosenoyl-CoA + reduced [electron-transfer flavoprotein]. It catalyses the reaction eicosanoyl-CoA + oxidized [electron-transfer flavoprotein] + H(+) = (2E)-eicosenoyl-CoA + reduced [electron-transfer flavoprotein]. It carries out the reaction hexacosanoyl-CoA + oxidized [electron-transfer flavoprotein] + H(+) = (2E)-hexacosenoyl-CoA + reduced [electron-transfer flavoprotein]. The catalysed reaction is tricosanoyl-CoA + oxidized [electron-transfer flavoprotein] + H(+) = (2E)-tricosenoyl-CoA + reduced [electron-transfer flavoprotein]. It participates in lipid metabolism; fatty acid beta-oxidation. In terms of biological role, acyl-CoA dehydrogenase, that exhibits maximal activity towards saturated C22-CoA. Probably participates in beta-oxydation and energy production but could also play a role in the metabolism of specific fatty acids to control fatty acids composition of cellular lipids in brain. The chain is Acyl-CoA dehydrogenase family member 11 (Acad11) from Mus musculus (Mouse).